We begin with the raw amino-acid sequence, 66 residues long: KEGYIVNHSTGCKYECYKLGDNDYCLRECKAQYGKGAGGYCYAFGCWCTHLYEQAVVWPLPKKTCN.

One can recognise an LCN-type CS-alpha/beta domain in the interval K1–N66. Disulfide bonds link C12-C65, C16-C41, C25-C46, and C29-C48.

Belongs to the long (4 C-C) scorpion toxin superfamily. Sodium channel inhibitor family. Beta subfamily. In terms of tissue distribution, expressed by the venom gland.

Its subcellular location is the secreted. Inhibited by human antibodies scFvs 10FG2 and LR. In terms of biological role, beta toxins bind voltage-independently at site-4 of sodium channels (Nav) and reduces peak current and shifts the voltage of activation toward more negative potentials thereby affecting sodium channel activation and promoting spontaneous and repetitive firing. Has an inhibitory effect on voltage-gated sodium channel hNav1.6/SCN8A, affecting both the activation and inactivation processes. This toxin is active against mammals and lethal to mice. This chain is Beta-toxin Cb1, found in Centruroides baergi (Scorpion).